A 634-amino-acid chain; its full sequence is Fluorothreonine transaldolase (634 aa).

Residues Y67, H221, and H247 each contribute to the pyridoxal 5'-phosphate site. At K248 the chain carries N6-(pyridoxal phosphate)lysine. Residue R375 participates in pyridoxal 5'-phosphate binding. The tract at residues T428 to P456 is disordered.

The protein belongs to the SHMT family. The cofactor is pyridoxal 5'-phosphate.

It catalyses the reaction fluoroacetaldehyde + L-threonine = 4-fluoro-L-threonine + acetaldehyde. Functionally, transaldolase that catalyzes the final step in 4-fluorothreonine biosynthesis. Mediates a L-threonine/fluoroaceldehyde to 4-fluoro-L-threonine/acetaldehyde crossover reaction. Can also convert chloroacetaldehyde into 4-chloro-L-threonine. Does not use glycine as a substrate. In Streptantibioticus cattleyicolor (Streptomyces cattleya), this protein is Fluorothreonine transaldolase.